We begin with the raw amino-acid sequence, 235 residues long: MAKRSKAYEAAAAKIDAEKSYAPFEAVTLAKDTNPSKFDATIEVAFRLGVDPRKADQMVRGTVNLPHGTGKTARVLVFATGDKAEAAIAAGADFVGSDDLIEKIAGGWTDFDAAVATPDLMGKVGRLGKVLGPRNLMPNPKTGTVTPDVTKAVNDIKGGKIDFRVDKHSNLHFIIGKVSFDAVKLAENYAAALEEVLRLKPSASKGRYIQKATVATTFGPGISVDPNVTKVLTEA.

Belongs to the universal ribosomal protein uL1 family. Part of the 50S ribosomal subunit.

Binds directly to 23S rRNA. The L1 stalk is quite mobile in the ribosome, and is involved in E site tRNA release. In terms of biological role, protein L1 is also a translational repressor protein, it controls the translation of the L11 operon by binding to its mRNA. The sequence is that of Large ribosomal subunit protein uL1 from Pseudarthrobacter chlorophenolicus (strain ATCC 700700 / DSM 12829 / CIP 107037 / JCM 12360 / KCTC 9906 / NCIMB 13794 / A6) (Arthrobacter chlorophenolicus).